The following is a 1435-amino-acid chain: Dicer-like protein 2 (1435 aa).

One can recognise a Helicase ATP-binding domain in the interval 54–234; that stretch reads MLSESLRQNI…LEVLEINLNA (181 aa). 67 to 74 provides a ligand contact to ATP; the sequence is MDTGSGKT. A DEAH box motif is present at residues 175–178; the sequence is DEAH. The Helicase C-terminal domain maps to 400–564; it reads KLIDFLVLEH…ENKRALEHIQ (165 aa). A Dicer dsRNA-binding fold domain is found at 591–684; it reads ARNHLSHFCG…MPAHHHIDDE (94 aa). 2 RNase III domains span residues 956–1099 and 1141–1323; these read ANEL…IDGG and LSEI…IDSQ. The Mg(2+) site is built by Glu1178, Asp1309, and Glu1312.

Belongs to the helicase family. Dicer subfamily. The cofactor is Mg(2+). Mn(2+) is required as a cofactor.

Its function is as follows. Dicer-like endonuclease involved in cleaving double-stranded RNA in the RNA interference (RNAi) pathway. Produces 21 to 25 bp dsRNAs (siRNAs) which target the selective destruction of homologous RNAs leading to sequence-specific suppression of gene expression, called post-transcriptional gene silencing (PTGS). Part of a broad host defense response against viral infection and transposons. The protein is Dicer-like protein 2 (DCL2) of Coccidioides immitis (strain RS) (Valley fever fungus).